The sequence spans 390 residues: Pyruvate dehydrogenase E1 component subunit alpha-1, mitochondrial (390 aa).

A mitochondrion-targeting transit peptide spans 1 to 15 (MAAAILLRRVPPARA). The pyruvate site is built by His-91, Tyr-117, Arg-118, Gly-166, Val-168, Asp-197, Gly-198, Ala-199, Asn-226, and Tyr-228. Residues Tyr-117, Arg-118, Gly-166, Val-168, Asp-197, Gly-198, Ala-199, and Asn-226 each coordinate thiamine diphosphate. Residue Asp-197 participates in Mg(2+) binding. Asn-226 and Tyr-228 together coordinate Mg(2+). A thiamine diphosphate-binding site is contributed by His-292. The disordered stretch occupies residues 293–312 (SMSDPGSTYRTRDEISGVRQ). The segment covering 302-312 (RTRDEISGVRQ) has biased composition (basic and acidic residues).

In terms of assembly, tetramer of 2 alpha and 2 beta subunits. Requires thiamine diphosphate as cofactor. The cofactor is Mg(2+).

The protein localises to the mitochondrion matrix. The enzyme catalyses N(6)-[(R)-lipoyl]-L-lysyl-[protein] + pyruvate + H(+) = N(6)-[(R)-S(8)-acetyldihydrolipoyl]-L-lysyl-[protein] + CO2. Its function is as follows. The pyruvate dehydrogenase complex catalyzes the overall conversion of pyruvate to acetyl-CoA and CO(2). It contains multiple copies of three enzymatic components: pyruvate dehydrogenase (E1), dihydrolipoamide acetyltransferase (E2) and lipoamide dehydrogenase (E3). The chain is Pyruvate dehydrogenase E1 component subunit alpha-1, mitochondrial from Oryza sativa subsp. japonica (Rice).